The chain runs to 1152 residues: Calcium-activated potassium channel subunit alpha-1 (1152 aa).

The tract at residues 1 to 37 (MSSNIHANHLSLDASSSSSSSSSSSSSSSSSSSSVHE) is disordered. Residues 1-60 (MSSNIHANHLSLDASSSSSSSSSSSSSSSSSSSSVHEPKMDALIIPVTMEVPCDSRGQRM) are Extracellular-facing. The segment covering 15–34 (SSSSSSSSSSSSSSSSSSSS) has biased composition (low complexity). Residues 61–81 (WWAFLASSMVTFFGGLFIILL) traverse the membrane as a helical segment. Residues 82 to 152 (WRTLKYLWTV…MISAQTLTGR (71 aa)) are Cytoplasmic-facing. S-palmitoyl cysteine attachment occurs at residues cysteine 92, cysteine 93, and cysteine 95. A helical transmembrane segment spans residues 153–173 (VLVVLVFALSIGALVIYFIDS). At 174–188 (SNPIESCQNFYKDFT) the chain is on the extracellular side. A helical membrane pass occupies residues 189 to 209 (LQIDMAFNVFFLLYFGLRFIA). Residues 210–213 (ANDK) lie on the Cytoplasmic side of the membrane. A helical membrane pass occupies residues 214–234 (LWFWLEVNSVVDFFTVPPVFV). Topologically, residues 235-238 (SVYL) are extracellular. The helical; Voltage-sensor transmembrane segment at 239–259 (NRSWLGLRFLRALRLIQFSEI) threads the bilayer. Residues 260–274 (LQFLNILKTSNSIKL) lie on the Cytoplasmic side of the membrane. The helical transmembrane segment at 275 to 295 (VNLLSIFISTWLTAAGFIHLV) threads the bilayer. Residues 296-309 (ENSGDPWENFQNNQ) lie on the Extracellular side of the membrane. The segment at residues 310 to 332 (ALTYWECVYLLMVTMSTVGYGDV) is an intramembrane region (pore-forming). A Selectivity for potassium motif is present at residues 326 to 329 (TVGY). At 333 to 341 (YAKTTLGRL) the chain is on the extracellular side. A helical membrane pass occupies residues 342-362 (FMVFFILGGLAMFASYVPEII). The Cytoplasmic segment spans residues 363–1152 (ELIGNRKKYG…KQKYVQEERL (790 aa)). The RCK N-terminal 1 domain maps to 381 to 523 (RKHIVVCGHI…WNWKEGDDAI (143 aa)). Residues glutamate 413, glutamine 436, and glutamate 438 each contribute to the Mg(2+) site. The segment at 530 to 550 (LGFIAQSCLAQGLSTMLANLF) is segment S7. The segment at 587–607 (LSFPTVCELCFVKLKLLMIAI) is segment S8. A heme-binding motif region spans residues 651–655 (CKACH). Positions 675–703 (EQPSTLSPKKKQRNGGMRNSPSSSPKLMR) are disordered. A Phosphothreonine modification is found at threonine 679. Residues serine 681, serine 694, and serine 698 each carry the phosphoserine modification. The segment S9 stretch occupies residues 753 to 773 (VLSGHVVVCIFGDVSSALIGL). The 145-residue stretch at 755–899 (SGHVVVCIFG…MDRSSPDNSP (145 aa)) folds into the RCK N-terminal 2 domain. The residue at position 886 (threonine 886) is a Phosphothreonine. Phosphoserine occurs at positions 894 and 898. The short motif at 919–941 (TELVNDTNVQFLDQDDDDDPDTE) is the Calcium bowl element. Residues glutamine 928, aspartate 931, aspartate 934, and aspartate 936 each coordinate Ca(2+). The interval 948–968 (FACGTAFAVSVLDSLMSATYF) is segment S10. Over residues 1102–1127 (RASLSHSSHSSQSSSKKSSSVHSIPS) the composition is skewed to low complexity. The segment at 1102-1152 (RASLSHSSHSSQSSSKKSSSVHSIPSTANRQNRPKSRESRDKQKYVQEERL) is disordered. Positions 1136–1152 (KSRESRDKQKYVQEERL) are enriched in basic and acidic residues. Serine 1137 and serine 1140 each carry phosphoserine.

It belongs to the potassium channel family. Calcium-activated (TC 1.A.1.3) subfamily. KCa1.1/KCNMA1 sub-subfamily. In terms of assembly, homotetramer; which constitutes the calcium-activated potassium channel. Interacts with beta subunits KCNMB1, KCNMB2, KCNMB3 and KCNMB4. Interacts with gamma subunits LRRC26, LRRC38, LRRC52 and LRRC55. Beta and gamma subunits are accessory, and modulate its activity. Interacts with RAB11B. In terms of processing, phosphorylated. Phosphorylation by kinases such as PKA and/or PKG. In smooth muscles, phosphorylation affects its activity. Palmitoylation by ZDHHC22 and ZDHHC23 within the intracellular linker between the S0 and S1 transmembrane domains regulates localization to the plasma membrane. Depalmitoylated by LYPLA1 and LYPLAL1, leading to retard exit from the trans-Golgi network.

It is found in the cell membrane. The enzyme catalyses K(+)(in) = K(+)(out). With respect to regulation, ethanol and carbon monoxide-bound heme increase channel activation. Heme inhibits channel activation. Functionally, potassium channel activated by both membrane depolarization or increase in cytosolic Ca(2+) that mediates export of K(+). It is also activated by the concentration of cytosolic Mg(2+). Its activation dampens the excitatory events that elevate the cytosolic Ca(2+) concentration and/or depolarize the cell membrane. It therefore contributes to repolarization of the membrane potential. Plays a key role in controlling excitability in a number of systems, such as regulation of the contraction of smooth muscle, the tuning of hair cells in the cochlea, regulation of transmitter release, and innate immunity. In smooth muscles, its activation by high level of Ca(2+), caused by ryanodine receptors in the sarcoplasmic reticulum, regulates the membrane potential. In cochlea cells, its number and kinetic properties partly determine the characteristic frequency of each hair cell and thereby helps to establish a tonotopic map. Kinetics of KCNMA1 channels are determined by alternative splicing, phosphorylation status and its combination with modulating beta subunits. Highly sensitive to both iberiotoxin (IbTx) and charybdotoxin (CTX). The protein is Calcium-activated potassium channel subunit alpha-1 (KCNMA1) of Sus scrofa (Pig).